We begin with the raw amino-acid sequence, 339 residues long: Methionine synthase (339 aa).

The Zn(2+) site is built by His212, Cys214, and Cys295.

Belongs to the archaeal MetE family. The cofactor is Zn(2+).

It participates in amino-acid biosynthesis; L-methionine biosynthesis via de novo pathway. Its function is as follows. Catalyzes the transfer of a methyl group to L-homocysteine resulting in methionine formation. The physiological methyl donor is unknown. The sequence is that of Methionine synthase from Sulfolobus acidocaldarius (strain ATCC 33909 / DSM 639 / JCM 8929 / NBRC 15157 / NCIMB 11770).